The following is a 493-amino-acid chain: Cysteine--tRNA ligase (493 aa).

C29 is a binding site for Zn(2+). Residues 31 to 41 (VTVYDLCHLGH) carry the 'HIGH' region motif. The Zn(2+) site is built by C213, H238, and E242. Residues 270 to 274 (KMSKS) carry the 'KMSKS' region motif. K273 serves as a coordination point for ATP.

Belongs to the class-I aminoacyl-tRNA synthetase family. Monomer. Zn(2+) serves as cofactor.

Its subcellular location is the cytoplasm. The enzyme catalyses tRNA(Cys) + L-cysteine + ATP = L-cysteinyl-tRNA(Cys) + AMP + diphosphate. The chain is Cysteine--tRNA ligase from Parasynechococcus marenigrum (strain WH8102).